Here is a 345-residue protein sequence, read N- to C-terminus: Probable dual-specificity RNA methyltransferase RlmN (345 aa).

E98 (proton acceptor) is an active-site residue. The region spanning 104–332 is the Radical SAM core domain; it reads TYKRLTVCVS…VSIRYSRGLE (229 aa). Cysteines 111 and 337 form a disulfide. [4Fe-4S] cluster contacts are provided by C118, C122, and C125. S-adenosyl-L-methionine is bound by residues 165–166, S195, 218–220, and N294; these read GE and SLH. Catalysis depends on C337, which acts as the S-methylcysteine intermediate.

The protein belongs to the radical SAM superfamily. RlmN family. [4Fe-4S] cluster serves as cofactor.

Its subcellular location is the cytoplasm. The enzyme catalyses adenosine(2503) in 23S rRNA + 2 reduced [2Fe-2S]-[ferredoxin] + 2 S-adenosyl-L-methionine = 2-methyladenosine(2503) in 23S rRNA + 5'-deoxyadenosine + L-methionine + 2 oxidized [2Fe-2S]-[ferredoxin] + S-adenosyl-L-homocysteine. It catalyses the reaction adenosine(37) in tRNA + 2 reduced [2Fe-2S]-[ferredoxin] + 2 S-adenosyl-L-methionine = 2-methyladenosine(37) in tRNA + 5'-deoxyadenosine + L-methionine + 2 oxidized [2Fe-2S]-[ferredoxin] + S-adenosyl-L-homocysteine. Its function is as follows. Specifically methylates position 2 of adenine 2503 in 23S rRNA and position 2 of adenine 37 in tRNAs. The protein is Probable dual-specificity RNA methyltransferase RlmN of Trichodesmium erythraeum (strain IMS101).